Consider the following 101-residue polypeptide: Small ribosomal subunit protein uS14 (101 aa).

Positions 50-70 (SLPRDSSPSRQRKRCRQTGRP) are disordered. Residues 59–68 (RQRKRCRQTG) show a composition bias toward basic residues.

Belongs to the universal ribosomal protein uS14 family. Part of the 30S ribosomal subunit. Contacts proteins S3 and S10.

Functionally, binds 16S rRNA, required for the assembly of 30S particles and may also be responsible for determining the conformation of the 16S rRNA at the A site. This is Small ribosomal subunit protein uS14 from Erwinia tasmaniensis (strain DSM 17950 / CFBP 7177 / CIP 109463 / NCPPB 4357 / Et1/99).